The primary structure comprises 201 residues: Flagellin B1 (201 aa).

Residues 1 to 11 (MFEQNDDRDRG) constitute a propeptide that is removed on maturation.

Belongs to the archaeal flagellin family.

It localises to the archaeal flagellum. Its function is as follows. Flagellin is the subunit protein which polymerizes to form the filaments of archaeal flagella. This Natrialba magadii (strain ATCC 43099 / DSM 3394 / CCM 3739 / CIP 104546 / IAM 13178 / JCM 8861 / NBRC 102185 / NCIMB 2190 / MS3) (Natronobacterium magadii) protein is Flagellin B1 (flaB1).